Reading from the N-terminus, the 728-residue chain is U-box domain-containing protein 4 (728 aa).

The U-box domain occupies 296-370 (SVPKEFSCPI…SQWCGVYGLQ (75 aa)). ARM repeat units follow at residues 441–483 (GAIP…EQEG) and 526–568 (GAVE…ESCA).

It carries out the reaction S-ubiquitinyl-[E2 ubiquitin-conjugating enzyme]-L-cysteine + [acceptor protein]-L-lysine = [E2 ubiquitin-conjugating enzyme]-L-cysteine + N(6)-ubiquitinyl-[acceptor protein]-L-lysine.. Its pathway is protein modification; protein ubiquitination. Its function is as follows. Possesses E3 ubiquitin-protein ligase in vitro. This Oryza sativa subsp. japonica (Rice) protein is U-box domain-containing protein 4 (PUB4).